The sequence spans 305 residues: Acetylglutamate kinase (305 aa).

Residues 78-79 (GG), Arg100, and Asn202 contribute to the substrate site.

This sequence belongs to the acetylglutamate kinase family. ArgB subfamily.

It localises to the cytoplasm. The catalysed reaction is N-acetyl-L-glutamate + ATP = N-acetyl-L-glutamyl 5-phosphate + ADP. It participates in amino-acid biosynthesis; L-arginine biosynthesis; N(2)-acetyl-L-ornithine from L-glutamate: step 2/4. Its function is as follows. Catalyzes the ATP-dependent phosphorylation of N-acetyl-L-glutamate. This Polaromonas sp. (strain JS666 / ATCC BAA-500) protein is Acetylglutamate kinase.